The following is a 347-amino-acid chain: Lipoyl synthase (347 aa).

Positions 55, 60, 66, 81, 85, 88, and 292 each coordinate [4Fe-4S] cluster. A Radical SAM core domain is found at 67 to 281 (WEDREATFLI…RDYGHDIGFA (215 aa)).

It belongs to the radical SAM superfamily. Lipoyl synthase family. It depends on [4Fe-4S] cluster as a cofactor.

Its subcellular location is the cytoplasm. It catalyses the reaction [[Fe-S] cluster scaffold protein carrying a second [4Fe-4S](2+) cluster] + N(6)-octanoyl-L-lysyl-[protein] + 2 oxidized [2Fe-2S]-[ferredoxin] + 2 S-adenosyl-L-methionine + 4 H(+) = [[Fe-S] cluster scaffold protein] + N(6)-[(R)-dihydrolipoyl]-L-lysyl-[protein] + 4 Fe(3+) + 2 hydrogen sulfide + 2 5'-deoxyadenosine + 2 L-methionine + 2 reduced [2Fe-2S]-[ferredoxin]. It participates in protein modification; protein lipoylation via endogenous pathway; protein N(6)-(lipoyl)lysine from octanoyl-[acyl-carrier-protein]: step 2/2. In terms of biological role, catalyzes the radical-mediated insertion of two sulfur atoms into the C-6 and C-8 positions of the octanoyl moiety bound to the lipoyl domains of lipoate-dependent enzymes, thereby converting the octanoylated domains into lipoylated derivatives. The sequence is that of Lipoyl synthase from Corynebacterium kroppenstedtii (strain DSM 44385 / JCM 11950 / CIP 105744 / CCUG 35717).